The primary structure comprises 184 residues: Ribosome-recycling factor (184 aa).

Belongs to the RRF family.

The protein resides in the cytoplasm. Its function is as follows. Responsible for the release of ribosomes from messenger RNA at the termination of protein biosynthesis. May increase the efficiency of translation by recycling ribosomes from one round of translation to another. The sequence is that of Ribosome-recycling factor from Thermoanaerobacter pseudethanolicus (strain ATCC 33223 / 39E) (Clostridium thermohydrosulfuricum).